The sequence spans 148 residues: Ribonuclease H (148 aa).

The RNase H type-1 domain maps to Met1–Asp142. Residues Asp10, Glu48, Asp70, and Asp134 each contribute to the Mg(2+) site. Residues Gly129 to Arg148 are disordered.

It belongs to the RNase H family. As to quaternary structure, monomer. Mg(2+) is required as a cofactor.

It localises to the cytoplasm. The catalysed reaction is Endonucleolytic cleavage to 5'-phosphomonoester.. Endonuclease that specifically degrades the RNA of RNA-DNA hybrids. This is Ribonuclease H from Pseudomonas putida (strain W619).